The sequence spans 1099 residues: R3H domain-containing protein 1 (1099 aa).

Residues 111–146 (SFEKEEKPSKDEAEKEKASDKLPRKMLSRDSSQEYT) form a disordered region. Basic and acidic residues predominate over residues 112 to 142 (FEKEEKPSKDEAEKEKASDKLPRKMLSRDSS). The R3H domain maps to 168–231 (RMMLLKLEQE…SVIVNKTSNT (64 aa)). Phosphoserine is present on residues Ser187 and Ser262. Residues 232 to 302 (RIPDQKFNEH…ARDRIFSQDS (71 aa)) form the SUZ domain. The segment at 267 to 287 (DNQMRIRLKDDRRSKSIEERE) is disordered. At Ser302 the chain carries Phosphoserine. Positions 331–370 (RVNKDASGRSTNSHQSSTENELKYSEPRPWSSTDSDSSLR) are disordered. Polar residues-rich tracts occupy residues 338–349 (GRSTNSHQSSTE) and 360–370 (WSSTDSDSSLR). A phosphoserine mark is found at Ser380, Ser381, and Ser393. Disordered regions lie at residues 387-439 (VLTR…SSHG), 490-537 (QTGQ…AANH), 583-625 (YIMT…HPVS), and 797-825 (EQVQFPRTTSPCSSQQLQGHQCTAGPPPP). Positions 391-422 (GDSSGSSKSIGRLSKTGSESSGSVGSSTGSLS) are enriched in low complexity. 2 stretches are compositionally biased toward pro residues: residues 519-532 (PGPPQPPLPAPPQQ) and 588-611 (APPPHPPPPPPPPPPPPPLPPGQP). Positions 797-817 (EQVQFPRTTSPCSSQQLQGHQ) are enriched in polar residues. At Arg929 the chain carries Asymmetric dimethylarginine; alternate. Arg929 is modified (omega-N-methylarginine; alternate). The segment at 941-977 (PPAVLHGHIPNQQGQPGSRHGNRGRRQAKKAASTDLG) is disordered. Basic residues predominate over residues 960-969 (HGNRGRRQAK). Ser973 carries the phosphoserine modification.

This Homo sapiens (Human) protein is R3H domain-containing protein 1 (R3HDM1).